A 143-amino-acid chain; its full sequence is Putative pre-16S rRNA nuclease (143 aa).

The protein belongs to the YqgF nuclease family.

It is found in the cytoplasm. Could be a nuclease involved in processing of the 5'-end of pre-16S rRNA. The sequence is that of Putative pre-16S rRNA nuclease from Mycoplasma capricolum subsp. capricolum (strain California kid / ATCC 27343 / NCTC 10154).